A 201-amino-acid chain; its full sequence is dTTP/UTP pyrophosphatase (201 aa).

Asp-73 acts as the Proton acceptor in catalysis.

It belongs to the Maf family. YhdE subfamily. A divalent metal cation is required as a cofactor.

It is found in the cytoplasm. It carries out the reaction dTTP + H2O = dTMP + diphosphate + H(+). The enzyme catalyses UTP + H2O = UMP + diphosphate + H(+). In terms of biological role, nucleoside triphosphate pyrophosphatase that hydrolyzes dTTP and UTP. May have a dual role in cell division arrest and in preventing the incorporation of modified nucleotides into cellular nucleic acids. The polypeptide is dTTP/UTP pyrophosphatase (Pseudomonas aeruginosa (strain ATCC 15692 / DSM 22644 / CIP 104116 / JCM 14847 / LMG 12228 / 1C / PRS 101 / PAO1)).